The primary structure comprises 263 residues: L-aspartate dehydrogenase (263 aa).

2 residues coordinate NAD(+): A120 and N186. H216 is a catalytic residue.

This sequence belongs to the L-aspartate dehydrogenase family.

The enzyme catalyses L-aspartate + NADP(+) + H2O = oxaloacetate + NH4(+) + NADPH + H(+). It catalyses the reaction L-aspartate + NAD(+) + H2O = oxaloacetate + NH4(+) + NADH + H(+). Its pathway is cofactor biosynthesis; NAD(+) biosynthesis; iminoaspartate from L-aspartate (dehydrogenase route): step 1/1. In terms of biological role, specifically catalyzes the NAD or NADP-dependent dehydrogenation of L-aspartate to iminoaspartate. This is L-aspartate dehydrogenase from Psychrobacter cryohalolentis (strain ATCC BAA-1226 / DSM 17306 / VKM B-2378 / K5).